The sequence spans 156 residues: MEKIPMTPKGLEAMNGELKQLKSVERPAIIKAIAEAREHGDLSENAEYHSAKEKQSFIEGRIKELEGSISLAQVIDPATLSGAIKFGATVDLVDEETEEEKTYMIVGEAEADIEKGLLNIKSPLARALIGKEEGDSVEVRTPGGAKGFEIVKISYV.

Residues Asn45 to Glu66 adopt a coiled-coil conformation.

Belongs to the GreA/GreB family.

Functionally, necessary for efficient RNA polymerase transcription elongation past template-encoded arresting sites. The arresting sites in DNA have the property of trapping a certain fraction of elongating RNA polymerases that pass through, resulting in locked ternary complexes. Cleavage of the nascent transcript by cleavage factors such as GreA or GreB allows the resumption of elongation from the new 3'terminus. GreA releases sequences of 2 to 3 nucleotides. The protein is Transcription elongation factor GreA of Jannaschia sp. (strain CCS1).